Here is a 105-residue protein sequence, read N- to C-terminus: uncharacterized protein (105 aa).

Belongs to the M.jannaschii MJ0023/MJ0349/MJ1072/MJ1074/MJ1107/MJECL16 family.

This is an uncharacterized protein from Methanocaldococcus jannaschii (strain ATCC 43067 / DSM 2661 / JAL-1 / JCM 10045 / NBRC 100440) (Methanococcus jannaschii).